The chain runs to 109 residues: U16-hexatoxin-Hi1a (109 aa).

An N-terminal signal peptide occupies residues 1–16 (LTGHLCCMMIWWQATQ). Residues 17–43 (VISPPLPVIREENNSHKMGVSLFPLKR) constitute a propeptide that is removed on maturation.

In terms of processing, contains 2 disulfide bonds. Expressed by the venom gland.

It is found in the secreted. Probable ion channel inhibitor. The chain is U16-hexatoxin-Hi1a from Hadronyche infensa (Fraser island funnel-web spider).